A 37-amino-acid chain; its full sequence is Large ribosomal subunit protein bL36 (37 aa).

It belongs to the bacterial ribosomal protein bL36 family.

The protein is Large ribosomal subunit protein bL36 of Leptospira interrogans serogroup Icterohaemorrhagiae serovar Lai (strain 56601).